A 486-amino-acid chain; its full sequence is Cysteine--tRNA ligase (486 aa).

Position 30 (Cys30) interacts with Zn(2+). Residues 32-42 (PTVYDRAHLGN) carry the 'HIGH' region motif. Residues Cys221, His246, and Glu250 each contribute to the Zn(2+) site. Residues 279–283 (KMSKS) carry the 'KMSKS' region motif. Lys282 contacts ATP.

Belongs to the class-I aminoacyl-tRNA synthetase family. Monomer. Requires Zn(2+) as cofactor.

It localises to the cytoplasm. It catalyses the reaction tRNA(Cys) + L-cysteine + ATP = L-cysteinyl-tRNA(Cys) + AMP + diphosphate. In Cereibacter sphaeroides (strain ATCC 17025 / ATH 2.4.3) (Rhodobacter sphaeroides), this protein is Cysteine--tRNA ligase.